The following is a 940-amino-acid chain: Isoleucine--tRNA ligase (940 aa).

Positions 58-68 match the 'HIGH' region motif; sequence PYANGSIHIGH. Position 564 (glutamate 564) interacts with L-isoleucyl-5'-AMP. The short motif at 605-609 is the 'KMSKS' region element; it reads KMSKS. Residue lysine 608 participates in ATP binding. 4 residues coordinate Zn(2+): cysteine 903, cysteine 906, cysteine 923, and cysteine 926.

The protein belongs to the class-I aminoacyl-tRNA synthetase family. IleS type 1 subfamily. Monomer. Zn(2+) serves as cofactor.

It is found in the cytoplasm. It carries out the reaction tRNA(Ile) + L-isoleucine + ATP = L-isoleucyl-tRNA(Ile) + AMP + diphosphate. Functionally, catalyzes the attachment of isoleucine to tRNA(Ile). As IleRS can inadvertently accommodate and process structurally similar amino acids such as valine, to avoid such errors it has two additional distinct tRNA(Ile)-dependent editing activities. One activity is designated as 'pretransfer' editing and involves the hydrolysis of activated Val-AMP. The other activity is designated 'posttransfer' editing and involves deacylation of mischarged Val-tRNA(Ile). In Shewanella baltica (strain OS155 / ATCC BAA-1091), this protein is Isoleucine--tRNA ligase.